The chain runs to 893 residues: Ubiquitin-like protease 2 (893 aa).

The tract at residues 538–800 (PVVLLVKDIK…YNLILQQADK (263 aa)) is protease. Catalysis depends on residues H644, D678, and C743.

The protein belongs to the peptidase C48 family.

Its subcellular location is the nucleus. The protein resides in the cytoplasm. It localises to the cytosol. Its function is as follows. Protease that catalyzes two essential functions in the smo-1 pathway: processing of full-length smo-1 to their mature forms and deconjugation of smo-1 from targeted proteins. May deconjugate smo-1 from the cadherin protein hmr-1 and plays a role in its recruitment to and the maintenance of adherens junctions. Required for epidermal morphogenesis during embryonic development. This is Ubiquitin-like protease 2 from Caenorhabditis elegans.